The following is a 395-amino-acid chain: Acetate kinase (395 aa).

A Mg(2+)-binding site is contributed by Asn-7. Lys-14 serves as a coordination point for ATP. Position 88 (Arg-88) interacts with substrate. The active-site Proton donor/acceptor is Asp-145. ATP contacts are provided by residues 205–209 (HLGNG), 279–281 (DFR), and 327–331 (GIGEN). Glu-381 serves as a coordination point for Mg(2+).

This sequence belongs to the acetokinase family. Homodimer. Requires Mg(2+) as cofactor. It depends on Mn(2+) as a cofactor.

It localises to the cytoplasm. The enzyme catalyses acetate + ATP = acetyl phosphate + ADP. It functions in the pathway metabolic intermediate biosynthesis; acetyl-CoA biosynthesis; acetyl-CoA from acetate: step 1/2. Its function is as follows. Catalyzes the formation of acetyl phosphate from acetate and ATP. Can also catalyze the reverse reaction. The polypeptide is Acetate kinase (Campylobacter jejuni subsp. jejuni serotype O:6 (strain 81116 / NCTC 11828)).